A 106-amino-acid chain; its full sequence is Cytochrome c3 (106 aa).

Residues histidine 26, histidine 29, cysteine 34, cysteine 37, histidine 38, histidine 39, cysteine 50, cysteine 55, histidine 56, histidine 75, cysteine 82, cysteine 85, histidine 86, cysteine 98, cysteine 101, and histidine 102 each coordinate heme c.

Binds 4 heme c groups per subunit.

Functionally, participates in sulfate respiration coupled with phosphorylation by transferring electrons from the enzyme dehydrogenase to ferredoxin. The protein is Cytochrome c3 of Maridesulfovibrio salexigens (Desulfovibrio salexigens).